The sequence spans 599 residues: RING finger protein unkempt (599 aa).

5 C3H1-type zinc fingers span residues 71 to 100 (YSAD…HRTA), 111 to 141 (YYKT…HGMQ), 194 to 220 (NYKT…HNSK), 230 to 264 (KYRS…HTRT), and 272 to 300 (IYKS…HVEP). Position 411 is a phosphoserine (serine 411). The RING-type zinc-finger motif lies at 556–591 (CMKCEENNRTVTLEPCNHLSICNTCAESVTECPYCQ).

Belongs to the unkempt family. In terms of tissue distribution, ubiquitous in most somatic tissues from syncytial embryo through to embryo stage 15. Expression becomes restricted predominantly to the CNS at stages 16 and 17.

The protein resides in the cytoplasm. In terms of biological role, essential for late larval/early pupal development. The chain is RING finger protein unkempt (unk) from Drosophila melanogaster (Fruit fly).